A 341-amino-acid chain; its full sequence is MAQITAKMVKELRERTGAGVMDAKKALVEVDGDMDKAVEFLREKGMAKAAKKADRVAAEGLTGVYVADNVAAVTEINSETDFVSQNDKFVKLVKDVTKTIAEGKPANIEEADELKMDDGSTLDQAFVNATATIGEKIVLRRFALEEKTDDQEFGAYQHNGGQIGVITVLEGADAATAKHLAMHIAAMNPKVISPDELDDEFITEQLALMNHKIDQDNESRELVHKKPLPHLVYGSEKQLTDDVLAKAKEDIKAELKEEGKPEKIWDRIIPGKMQRFIDDNTQVDKQFAVLSQDYIMDDSKTVGEFLKEKGAKLVAFQRFEVGEGIEKKQEDFAAEVREQMK.

Positions 80–83 are involved in Mg(2+) ion dislocation from EF-Tu; the sequence is TDFV.

The protein belongs to the EF-Ts family.

It is found in the cytoplasm. In terms of biological role, associates with the EF-Tu.GDP complex and induces the exchange of GDP to GTP. It remains bound to the aminoacyl-tRNA.EF-Tu.GTP complex up to the GTP hydrolysis stage on the ribosome. The protein is Elongation factor Ts of Lactobacillus acidophilus (strain ATCC 700396 / NCK56 / N2 / NCFM).